Consider the following 194-residue polypeptide: Adapter protein MecA 2 (194 aa).

Belongs to the MecA family. In terms of assembly, homodimer.

In terms of biological role, enables the recognition and targeting of unfolded and aggregated proteins to the ClpC protease or to other proteins involved in proteolysis. Also involved in Spx degradation by ClpC. Acts negatively in the development of competence by binding ComK and recruiting it to the ClpCP protease. When overexpressed, inhibits sporulation. This Bacillus subtilis (strain 168) protein is Adapter protein MecA 2 (mecB).